The following is a 368-amino-acid chain: Phospho-N-acetylmuramoyl-pentapeptide-transferase (368 aa).

A run of 9 helical transmembrane segments spans residues 30 to 50 (AAAITALLITLLIGPKLIAYL), 72 to 92 (LPTMGGLLIIFAFELSVFLWA), 99 to 119 (VWLVMVAVLWMGAVGFLDDYL), 135 to 155 (LIGQVLLGLLVGLYAWFDPSM), 170 to 190 (LTINYGIFYVPVVIFIITAIS), 201 to 221 (GLAAGTSAIAFIGLAGFAYLA), 238 to 258 (GGEVAIVSMALVMACVGFLWF), 265 to 286 (IIMGDTGSLALGSAMAVIALLI), and 345 to 365 (KIVIRFWIMAILFFLASLMTL).

It belongs to the glycosyltransferase 4 family. MraY subfamily. Requires Mg(2+) as cofactor.

The protein resides in the cell inner membrane. The enzyme catalyses UDP-N-acetyl-alpha-D-muramoyl-L-alanyl-gamma-D-glutamyl-meso-2,6-diaminopimeloyl-D-alanyl-D-alanine + di-trans,octa-cis-undecaprenyl phosphate = di-trans,octa-cis-undecaprenyl diphospho-N-acetyl-alpha-D-muramoyl-L-alanyl-D-glutamyl-meso-2,6-diaminopimeloyl-D-alanyl-D-alanine + UMP. Its pathway is cell wall biogenesis; peptidoglycan biosynthesis. Catalyzes the initial step of the lipid cycle reactions in the biosynthesis of the cell wall peptidoglycan: transfers peptidoglycan precursor phospho-MurNAc-pentapeptide from UDP-MurNAc-pentapeptide onto the lipid carrier undecaprenyl phosphate, yielding undecaprenyl-pyrophosphoryl-MurNAc-pentapeptide, known as lipid I. This Chlorobium chlorochromatii (strain CaD3) protein is Phospho-N-acetylmuramoyl-pentapeptide-transferase.